A 160-amino-acid polypeptide reads, in one-letter code: Transcription antitermination protein NusB (160 aa).

It belongs to the NusB family.

Involved in transcription antitermination. Required for transcription of ribosomal RNA (rRNA) genes. Binds specifically to the boxA antiterminator sequence of the ribosomal RNA (rrn) operons. This chain is Transcription antitermination protein NusB, found in Allorhizobium ampelinum (strain ATCC BAA-846 / DSM 112012 / S4) (Agrobacterium vitis (strain S4)).